A 988-amino-acid polypeptide reads, in one-letter code: Next to BRCA1 gene 1 protein (988 aa).

One can recognise a PB1 domain in the interval 4–86 (QVTLNVTFKN…NQLQMQVHEG (83 aa)). Residue Ser117 is modified to Phosphoserine. Residues 126-150 (MKTTEEPAPEQCSSAPCDTDQPQDK) are disordered. The segment at 213–265 (SWHIACSHCQKRIVGVRYQCSLCPSYNICEDCEAGPYTHDTNHVLLKLRRPVV) adopts a ZZ-type zinc-finger fold. Residues Cys218, Cys221, Cys232, Cys235, Cys241, Cys244, His251, and His255 each contribute to the Zn(2+) site. ATG8 family proteins-binding stretches follow at residues 543–637 (ASER…PASV) and 745–756 (ASSEDYIIILPE). Thr587 is modified (phosphothreonine). Residues Ser591, Ser597, and Ser626 each carry the phosphoserine modification. Positions 611 to 644 (ESEGAGFKAPPDSTVSAKRKAETPASVEETEEDL) are disordered. Disordered stretches follow at residues 768–822 (MYSS…TSQP) and 841–900 (RSAP…HHNG). Residues 795–807 (TEARERLPERESQ) show a composition bias toward basic and acidic residues. A compositionally biased stretch (polar residues) spans 808–822 (PQEQSISDILTTSQP). Ser860 bears the Phosphoserine mark. The UBA domain maps to 935–979 (SEDQTTALMAHLFEMGFCDRQLNLRLLRKHNYNILQVVTELLQVN).

As to quaternary structure, homooligomer and heterooligomer. Interacts with TRIM55. Interacts with titin/TTN. Interacts with RNF29, USP8, MAP1LC3A, MAP1LC3B, MAP1LC3C, GABARAP, GABARAPL1 and GABARAPL2. Binds to ubiquitin and ubiquitinated proteins. Interacts with SQSTM1. Interacts with TAX1BP1. Interacts with IRF3; this interaction mediates autophagic degradation of IRF3. Interacts with IL12A and IL12B. Post-translationally, phosphorylated by GSK3A; this phosphorylation inhibits NBR1 involvement in the formation of ubiquitinated protein aggregates. In terms of tissue distribution, expressed in brain.

The protein localises to the cytoplasm. The protein resides in the cytoplasmic vesicle. Its subcellular location is the autophagosome. It localises to the lysosome. It is found in the myofibril. The protein localises to the sarcomere. The protein resides in the m line. Ubiquitin-binding autophagy adapter that participates in different processes including host defense or intracellular homeostasis. Possesses a double function during the selective autophagy by acting as a shuttle bringing ubiquitinated proteins to autophagosomes and also by participating in the formation of protein aggregates. Plays a role in the regulation of the innate immune response by modulating type I interferon production and targeting ubiquitinated IRF3 for autophagic degradation. In response to oxidative stress, promotes an increase in SQSTM1 levels, phosphorylation, and body formation by preventing its autophagic degradation. In turn, activates the KEAP1-NRF2/NFE2L2 antioxidant pathway. Also plays non-autophagy role by mediating the shuttle of IL-12 to late endosome for subsequent secretion. In Mus musculus (Mouse), this protein is Next to BRCA1 gene 1 protein (Nbr1).